Here is a 326-residue protein sequence, read N- to C-terminus: Eukaryotic translation initiation factor 2 subunit 1 (326 aa).

One can recognise an S1 motif domain in the interval 24–95 (DDLIMVKVNR…QKGYIDLSKR (72 aa)). Serine 59 carries the phosphoserine; by eIK1, eIK2 and PK4 modification. The tract at residues 291–326 (LDKHDGLSSDDEYSSDGDEDDSSNDDDNSSDEDDDD) is disordered. The segment covering 298–326 (SSDDEYSSDGDEDDSSNDDDNSSDEDDDD) has biased composition (acidic residues).

Belongs to the eIF-2-alpha family. Post-translationally, phosphorylates at Ser-59 in mature trophozoites, schizonts and gametocytes but not in rings and young trophozoites. Phosphorylates at Ser-59 by eIK2 in salivary gland sporozoites but not in midgut and hemocoel sporozoites. Dephosphorylated at Ser-59 by UIS2. Phosphorylation of eIF2alpha subunit of the pre-initiation complex eIF2 inhibits recycling of inactive eIF2-GDP to active eIF2-GTP by limiting the activity of the guanine nucleotide exchange factor eIF2B and thus, inhibits protein translation.

Its subcellular location is the cytoplasm. The protein resides in the stress granule. Functions in the early steps of protein synthesis by forming a ternary complex with GTP and initiator tRNA. May regulate protein translation in response to amino acid starvation. May regulate protein at various stages of parasite development. This Plasmodium berghei (strain Anka) protein is Eukaryotic translation initiation factor 2 subunit 1.